Consider the following 213-residue polypeptide: Kynurenine formamidase (213 aa).

Trp20 lines the substrate pocket. Positions 50, 54, and 56 each coordinate Zn(2+). Residue His60 is the Proton donor/acceptor of the active site. Positions 161 and 173 each coordinate Zn(2+).

This sequence belongs to the Cyclase 1 superfamily. KynB family. Homodimer. It depends on Zn(2+) as a cofactor.

It carries out the reaction N-formyl-L-kynurenine + H2O = L-kynurenine + formate + H(+). It functions in the pathway amino-acid degradation; L-tryptophan degradation via kynurenine pathway; L-kynurenine from L-tryptophan: step 2/2. Catalyzes the hydrolysis of N-formyl-L-kynurenine to L-kynurenine, the second step in the kynurenine pathway of tryptophan degradation. This is Kynurenine formamidase from Pseudomonas aeruginosa (strain ATCC 15692 / DSM 22644 / CIP 104116 / JCM 14847 / LMG 12228 / 1C / PRS 101 / PAO1).